Here is a 250-residue protein sequence, read N- to C-terminus: Anamorsin homolog 2 (250 aa).

Residues M1–Q102 form an N-terminal SAM-like domain region. The linker stretch occupies residues Q102 to V149. Positions 155, 162, 165, and 167 each coordinate [2Fe-2S] cluster. The segment at C155–C167 is fe-S binding site A. C193, C196, C204, and C207 together coordinate [4Fe-4S] cluster. 2 consecutive short sequence motifs (cx2C motif) follow at residues C193–C196 and C204–C207. The fe-S binding site B stretch occupies residues C193–C207.

It belongs to the anamorsin family. In terms of assembly, monomer. The cofactor is [2Fe-2S] cluster. [4Fe-4S] cluster serves as cofactor.

The protein resides in the cytoplasm. Its subcellular location is the mitochondrion intermembrane space. In terms of biological role, component of the cytosolic iron-sulfur (Fe-S) protein assembly (CIA) machinery. Required for the maturation of extramitochondrial Fe-S proteins. Part of an electron transfer chain functioning in an early step of cytosolic Fe-S biogenesis, facilitating the de novo assembly of a [4Fe-4S] cluster on the cytosolic Fe-S scaffold complex. Electrons are transferred from NADPH via a FAD- and FMN-containing diflavin oxidoreductase. Together with the diflavin oxidoreductase, also required for the assembly of the diferric tyrosyl radical cofactor of ribonucleotide reductase (RNR), probably by providing electrons for reduction during radical cofactor maturation in the catalytic small subunit. This chain is Anamorsin homolog 2, found in Paramecium tetraurelia.